The chain runs to 349 residues: Ion-translocating oxidoreductase complex subunit D (349 aa).

3 helical membrane passes run C36–S56, S77–V99, and A124–A144. T185 carries the post-translational modification FMN phosphoryl threonine. A run of 5 helical transmembrane segments spans residues G212–L232, W239–L259, A265–T285, A291–I311, and G315–I335.

The protein belongs to the NqrB/RnfD family. The complex is composed of six subunits: RnfA, RnfB, RnfC, RnfD, RnfE and RnfG. FMN is required as a cofactor.

It localises to the cell inner membrane. In terms of biological role, part of a membrane-bound complex that couples electron transfer with translocation of ions across the membrane. This Shewanella sp. (strain MR-4) protein is Ion-translocating oxidoreductase complex subunit D.